A 282-amino-acid chain; its full sequence is Nicotianamine synthase-like 5 protein (282 aa).

The protein belongs to the nicotianamine synthase (NAS)-like family.

This chain is Nicotianamine synthase-like 5 protein (NAS5), found in Hordeum vulgare (Barley).